Here is a 1171-residue protein sequence, read N- to C-terminus: ATP-dependent helicase/deoxyribonuclease subunit B (1171 aa).

In terms of domain architecture, UvrD-like helicase ATP-binding spans 1 to 343; that stretch reads MSLRFVIGRA…LVAEENYRYR (343 aa). 8–15 provides a ligand contact to ATP; that stretch reads GRAGSGKS. Positions 281-587 constitute a UvrD-like helicase C-terminal domain; that stretch reads MEQPRFHSPA…QFANIPPSLD (307 aa). [4Fe-4S] cluster is bound by residues C805, C1129, C1132, and C1138.

It belongs to the helicase family. AddB/RexB type 1 subfamily. In terms of assembly, heterodimer of AddA and AddB. It depends on Mg(2+) as a cofactor. Requires [4Fe-4S] cluster as cofactor.

In terms of biological role, the heterodimer acts as both an ATP-dependent DNA helicase and an ATP-dependent, dual-direction single-stranded exonuclease. Recognizes the chi site generating a DNA molecule suitable for the initiation of homologous recombination. The AddB subunit has 5' -&gt; 3' nuclease activity but not helicase activity. The polypeptide is ATP-dependent helicase/deoxyribonuclease subunit B (Bacillus thuringiensis subsp. konkukian (strain 97-27)).